A 342-amino-acid polypeptide reads, in one-letter code: (Lyso)-N-acylphosphatidylethanolamine lipase (342 aa).

The region spanning proline 70 to tyrosine 323 is the AB hydrolase-1 domain.

Belongs to the peptidase S33 family. ABHD4/ABHD5 subfamily. Highest levels in the CNS and in testis, intermediate levels in liver and kidney. Hardly detectable in heart.

It carries out the reaction N-hexadecanoyl-1,2-di-(9Z-octadecenoyl)-sn-glycero-3-phosphoethanolamine + H2O = N-hexadecanoyl-1-(9Z-octadecenoyl)-sn-glycero-3-phosphoethanolamine + (9Z)-octadecenoate + H(+). The enzyme catalyses an N-acyl-1,2-diacyl-sn-glycero-3-phosphoethanolamine + H2O = N,1-diacyl-sn-glycero-3-phosphoethanolamine + a fatty acid + H(+). The catalysed reaction is N-hexadecanoyl-1-(9Z-octadecenoyl)-sn-glycero-3-phosphoethanolamine + H2O = N-hexadecanoyl-sn-glycero-3-phosphoethanolamine + (9Z)-octadecenoate + H(+). It catalyses the reaction N-octadecanoyl-1-(9Z-octadecenoyl)-sn-glycero-3-phosphoethanolamine + H2O = N-octadecanoyl-sn-glycero-3-phospho-ethanolamine + (9Z)-octadecenoate + H(+). It carries out the reaction N-eicosanoyl-1-(9Z-octadecenoyl)-sn-glycero-3-phosphoethanolamine + H2O = N-eicosanoyl-sn-glycero-3-phosphoethanolamine + (9Z)-octadecenoate + H(+). The enzyme catalyses N,1-di-(9Z-octadecenoyl)-sn-glycero-3-phosphoethanolamine + H2O = N-(9Z-octadecenoyl)-sn-glycero-3-phosphoethanolamine + (9Z)-octadecenoate + H(+). The catalysed reaction is N-(5Z,8Z,11Z,14Z-eicosatetraenoyl)-1-(9Z-octadecenoyl)-sn-glycero-3-phosphoethanolamine + H2O = N-(5Z,8Z,11Z,14Z-eicosatetraenoyl)-sn-glycero-3-phosphoethanolamine + (9Z)-octadecenoate + H(+). It catalyses the reaction 1-octadecanoyl-2-(9Z-octadecenoyl)-sn-glycero-3-phospho-(N-hexadecanoyl)-serine + H2O = 1-octadecanoyl-2-hydroxy-sn-glycero-3-phospho-(N-hexadecanoyl)-serine + (9Z)-octadecenoate + H(+). It carries out the reaction 1-O-(1Z-octadecenoyl)-2-(9Z-octadecenoyl)-sn-glycero-3-phospho-N-hexadecanoyl-ethanolamine + H2O = 1-O-(1Z-octadecenyl)-sn-glycero-3-phospho-N-hexadecanoyl-ethanolamine + (9Z)-octadecenoate + H(+). The enzyme catalyses N,1-diacyl-sn-glycero-3-phosphoethanolamine + H2O = N-acyl-sn-glycero-3-phosphoethanolamine + a fatty acid + H(+). Its function is as follows. Lysophospholipase selective for N-acyl phosphatidylethanolamine (NAPE). Contributes to the biosynthesis of N-acyl ethanolamines, including the endocannabinoid anandamide by hydrolyzing the sn-1 and sn-2 acyl chains from N-acyl phosphatidylethanolamine (NAPE) generating glycerophospho-N-acyl ethanolamine (GP-NAE), an intermediate for N-acyl ethanolamine biosynthesis. Hydrolyzes substrates bearing saturated, monounsaturated, polyunsaturated N-acyl chains. Shows no significant activity towards other lysophospholipids, including lysophosphatidylcholine, lysophosphatidylethanolamine and lysophosphatidylserine. This is (Lyso)-N-acylphosphatidylethanolamine lipase from Mus musculus (Mouse).